Here is a 156-residue protein sequence, read N- to C-terminus: Small ribosomal subunit protein uS7 (156 aa).

It belongs to the universal ribosomal protein uS7 family. Part of the 30S ribosomal subunit. Contacts proteins S9 and S11.

Functionally, one of the primary rRNA binding proteins, it binds directly to 16S rRNA where it nucleates assembly of the head domain of the 30S subunit. Is located at the subunit interface close to the decoding center, probably blocks exit of the E-site tRNA. The chain is Small ribosomal subunit protein uS7 (rspG) from Streptomyces coelicolor (strain ATCC BAA-471 / A3(2) / M145).